Reading from the N-terminus, the 206-residue chain is Holliday junction branch migration complex subunit RuvA (206 aa).

The domain I stretch occupies residues 1 to 64; it reads MIGKLKGTLD…EDMLRLYGFQ (64 aa). Residues 65 to 144 form a domain II region; it reads SALEREWFRL…AYAGAASGTI (80 aa). Residues 145-154 form a flexible linker region; it reads GLKQELGEGV. The tract at residues 154 to 206 is domain III; it reads VAPAPITDAVSALVNLGYSRDTAANAVAAALKTAGEDADASKLIRFGLKELAR.

The protein belongs to the RuvA family. As to quaternary structure, homotetramer. Forms an RuvA(8)-RuvB(12)-Holliday junction (HJ) complex. HJ DNA is sandwiched between 2 RuvA tetramers; dsDNA enters through RuvA and exits via RuvB. An RuvB hexamer assembles on each DNA strand where it exits the tetramer. Each RuvB hexamer is contacted by two RuvA subunits (via domain III) on 2 adjacent RuvB subunits; this complex drives branch migration. In the full resolvosome a probable DNA-RuvA(4)-RuvB(12)-RuvC(2) complex forms which resolves the HJ.

Its subcellular location is the cytoplasm. Its function is as follows. The RuvA-RuvB-RuvC complex processes Holliday junction (HJ) DNA during genetic recombination and DNA repair, while the RuvA-RuvB complex plays an important role in the rescue of blocked DNA replication forks via replication fork reversal (RFR). RuvA specifically binds to HJ cruciform DNA, conferring on it an open structure. The RuvB hexamer acts as an ATP-dependent pump, pulling dsDNA into and through the RuvAB complex. HJ branch migration allows RuvC to scan DNA until it finds its consensus sequence, where it cleaves and resolves the cruciform DNA. This Mesorhizobium japonicum (strain LMG 29417 / CECT 9101 / MAFF 303099) (Mesorhizobium loti (strain MAFF 303099)) protein is Holliday junction branch migration complex subunit RuvA.